Consider the following 255-residue polypeptide: 3-deoxy-manno-octulosonate cytidylyltransferase (255 aa).

Belongs to the KdsB family.

It is found in the cytoplasm. It catalyses the reaction 3-deoxy-alpha-D-manno-oct-2-ulosonate + CTP = CMP-3-deoxy-beta-D-manno-octulosonate + diphosphate. The protein operates within nucleotide-sugar biosynthesis; CMP-3-deoxy-D-manno-octulosonate biosynthesis; CMP-3-deoxy-D-manno-octulosonate from 3-deoxy-D-manno-octulosonate and CTP: step 1/1. Its pathway is bacterial outer membrane biogenesis; lipopolysaccharide biosynthesis. Its function is as follows. Activates KDO (a required 8-carbon sugar) for incorporation into bacterial lipopolysaccharide in Gram-negative bacteria. The protein is 3-deoxy-manno-octulosonate cytidylyltransferase of Psychromonas ingrahamii (strain DSM 17664 / CCUG 51855 / 37).